A 147-amino-acid polypeptide reads, in one-letter code: MKALVILGFLFLSVAVQGKVFERCELARTLKKLGLDGYKGVSLANWLCLTKWESSYNTKATNYNPSSESTDYGIFQINSKWWCNDGKTPNAVDGCHVSCRELMENDIAKAVACAKHIVSEQGITAWVAWKSHCRDHDVSSYVEGCTL.

An N-terminal signal peptide occupies residues 1 to 18; the sequence is MKALVILGFLFLSVAVQG. Positions 19–147 constitute a C-type lysozyme domain; sequence KVFERCELAR…VSSYVEGCTL (129 aa). Cystine bridges form between C24–C145, C48–C133, C83–C99, and C95–C113. Catalysis depends on residues E53 and D71.

The protein belongs to the glycosyl hydrolase 22 family. In terms of assembly, monomer. As to expression, stomach-specific.

The enzyme catalyses Hydrolysis of (1-&gt;4)-beta-linkages between N-acetylmuramic acid and N-acetyl-D-glucosamine residues in a peptidoglycan and between N-acetyl-D-glucosamine residues in chitodextrins.. Functionally, lysozymes have primarily a bacteriolytic function; those in tissues and body fluids are associated with the monocyte-macrophage system and enhance the activity of immunoagents. The sequence is that of Lysozyme C (LYZ1) from Bos taurus (Bovine).